Consider the following 897-residue polypeptide: 4-hydroxyphenylacetate decarboxylase glycyl radical subunit (897 aa).

The region spanning 35 to 770 is the PFL domain; sequence ESTQKLMDIY…VTLATADGRL (736 aa). Positions 344 and 503 each coordinate 4-hydroxyphenylacetate. Residue C503 is the Cysteine radical intermediate of the active site. E505 (proton donor) is an active-site residue. The 4-hydroxyphenylacetate site is built by H536 and E637. The Glycine radical domain occupies 778–897; the sequence is GSVSAAAGTD…EVIYRTEYDK (120 aa). G873 carries the glycine radical modification.

The protein belongs to the glycyl radical enzyme (GRE) family. HPAD subfamily. In terms of assembly, heterooctamer consisting of 4 large (HpdB) subunits and 4 small (HpdC) subunits, arranged as a tetramer of heterodimers. Also forms a catalytically inactive homodimer. In terms of processing, requires the activating protein CsdA to generate the key active site glycyl radical that is involved in catalysis. Post-translationally, phosphorylated on serine. Phosphorylation may trigger the formation of the active heterooctamers and thereby regulates enzyme activity.

It catalyses the reaction 4-hydroxyphenylacetate + H(+) = 4-methylphenol + CO2. The catalysed reaction is 3,4-dihydroxyphenylacetate + H(+) = 4-methylcatechol + CO2. Glycyl radical subunit of the HPA decarboxylase that decarboxylates phenylacetates with a hydroxyl group in the p-position. Active toward 4-hydroxyphenylacetate and 3,4-dihydroxyphenylacetate, forming 4-methylphenol and 4-methylcatechol, respectively. Is likely involved in the catabolism of aromatic amino acids such as tyrosine fermentation. 4-methylphenol (p-cresol) formation provides metabolic toxicity, which allows an active suppression of other microbes and may provide growth advantages for the producers in highly competitive environments. The large subunit is the catalytic subunit that binds the substrate. The protein is 4-hydroxyphenylacetate decarboxylase glycyl radical subunit of Clostridium scatologenes.